Reading from the N-terminus, the 725-residue chain is Protein ECM27 (725 aa).

A run of 12 helical transmembrane segments spans residues 21–41 (VTFI…LGIC), 119–139 (VLGA…IIMS), 157–177 (LLFS…NQVT), 178–198 (VLNC…KLTF), 397–417 (ISDA…KLSC), 439–459 (LPII…CSIL), 470–490 (LVYL…TAFI), 526–546 (IQII…SLLA), 559–579 (ILGL…NSVG), 621–641 (LNSM…IGAF), 668–688 (FIVS…FFGG), and 704–724 (GISM…LELF).

The protein belongs to the Ca(2+):cation antiporter (CaCA) (TC 2.A.19) family.

The protein resides in the membrane. The sequence is that of Protein ECM27 (ECM27) from Saccharomyces cerevisiae (strain ATCC 204508 / S288c) (Baker's yeast).